We begin with the raw amino-acid sequence, 508 residues long: Ribose import ATP-binding protein RbsA 2 (508 aa).

2 ABC transporter domains span residues 6-241 (LTIH…VGRE) and 254-499 (ERSG…SGMG). An ATP-binding site is contributed by 38–45 (GENGAGKS).

Belongs to the ABC transporter superfamily. Ribose importer (TC 3.A.1.2.1) family. The complex is composed of an ATP-binding protein (RbsA), two transmembrane proteins (RbsC) and a solute-binding protein (RbsB).

Its subcellular location is the cell inner membrane. The enzyme catalyses D-ribose(out) + ATP + H2O = D-ribose(in) + ADP + phosphate + H(+). Part of the ABC transporter complex RbsABC involved in ribose import. Responsible for energy coupling to the transport system. This Rhizobium etli (strain ATCC 51251 / DSM 11541 / JCM 21823 / NBRC 15573 / CFN 42) protein is Ribose import ATP-binding protein RbsA 2.